The following is a 446-amino-acid chain: Sorting nexin-30 (446 aa).

Positions 1-18 (MSGSSTPKSLPTSGQQSL) are enriched in polar residues. Positions 1–84 (MSGSSTPKSL…SSPASSSSLL (84 aa)) are disordered. Positions 70–84 (TPADTSSPASSSSLL) are enriched in low complexity. Residues 98-219 (RDLFVTVDDP…VFLTAKDLNS (122 aa)) enclose the PX domain. 4 residues coordinate a 1,2-diacyl-sn-glycero-3-phospho-(1D-myo-inositol-3-phosphate): arginine 141, glutamine 143, lysine 171, and arginine 185. Residues 243–446 (KLRNRPVEFA…PLLQDKQEPK (204 aa)) enclose the BAR domain.

It belongs to the sorting nexin family.

It is found in the early endosome membrane. Involved in the regulation of endocytosis and in several stages of intracellular trafficking. Together with snx4, involved in autophagosome assembly. This is Sorting nexin-30 (snx30) from Xenopus tropicalis (Western clawed frog).